A 513-amino-acid chain; its full sequence is NADH-quinone oxidoreductase chain 13 (513 aa).

14 consecutive transmembrane segments (helical) span residues Asn-3–Leu-23, Ala-34–Phe-54, Val-81–Leu-101, Glu-112–Asp-132, Leu-133–Ile-153, Phe-164–Met-184, Met-211–Val-231, Pro-250–Leu-270, Phe-277–Val-297, Val-312–Asn-332, Ile-340–Ile-360, Ala-383–Val-403, Trp-418–Tyr-438, and Trp-463–Thr-483.

It belongs to the complex I subunit 4 family. NDH-1 is composed of at least 14 different subunits, Nqo1 to Nqo14. The complex has a L-shaped structure, with the hydrophobic arm (subunits Nqo7, Nqo8, Nqo10 to Nqo14) embedded in the inner membrane and the hydrophilic peripheral arm (subunits Nqo1 to Nqo6, Nqo9) protruding into the bacterial cytoplasm. The hydrophilic domain contains all the redox centers.

It is found in the cell inner membrane. It carries out the reaction a quinone + NADH + 5 H(+)(in) = a quinol + NAD(+) + 4 H(+)(out). Its function is as follows. NDH-1 shuttles electrons from NADH, via FMN and iron-sulfur (Fe-S) centers, to quinones in the respiratory chain. The immediate electron acceptor for the enzyme in this species is believed to be ubiquinone. Couples the redox reaction to proton translocation (for every two electrons transferred, four hydrogen ions are translocated across the cytoplasmic membrane), and thus conserves the redox energy in a proton gradient. The protein is NADH-quinone oxidoreductase chain 13 of Paracoccus denitrificans.